The following is a 369-amino-acid chain: NAD(P)H-quinone oxidoreductase subunit 1, chloroplastic (369 aa).

5 helical membrane-spanning segments follow: residues Phe25–Ile45, Val104–Ile124, Ile130–Gly150, Leu270–Pro290, and Val306–Ile326.

Belongs to the complex I subunit 1 family. As to quaternary structure, NDH is composed of at least 16 different subunits, 5 of which are encoded in the nucleus.

The protein resides in the plastid. It is found in the chloroplast thylakoid membrane. It catalyses the reaction a plastoquinone + NADH + (n+1) H(+)(in) = a plastoquinol + NAD(+) + n H(+)(out). The enzyme catalyses a plastoquinone + NADPH + (n+1) H(+)(in) = a plastoquinol + NADP(+) + n H(+)(out). NDH shuttles electrons from NAD(P)H:plastoquinone, via FMN and iron-sulfur (Fe-S) centers, to quinones in the photosynthetic chain and possibly in a chloroplast respiratory chain. The immediate electron acceptor for the enzyme in this species is believed to be plastoquinone. Couples the redox reaction to proton translocation, and thus conserves the redox energy in a proton gradient. This is NAD(P)H-quinone oxidoreductase subunit 1, chloroplastic from Huperzia lucidula (Shining clubmoss).